A 160-amino-acid polypeptide reads, in one-letter code: AP-1 complex subunit sigma-2 (160 aa).

The protein belongs to the adaptor complexes small subunit family. As to quaternary structure, adaptor protein complex 1 (AP-1) is a heterotetramer composed of two large adaptins (gamma-type subunit AP1G1 and beta-type subunit AP1B1), a medium adaptin (mu-type subunit AP1M1 or AP1M2) and a small adaptin (sigma-type subunit AP1S1 or AP1S2 or AP1S3). Binds to MUC1. Widely expressed.

It localises to the golgi apparatus. The protein localises to the cytoplasmic vesicle membrane. It is found in the membrane. Its subcellular location is the clathrin-coated pit. In terms of biological role, subunit of clathrin-associated adaptor protein complex 1 that plays a role in protein sorting in the late-Golgi/trans-Golgi network (TGN) and/or endosomes. The AP complexes mediate both the recruitment of clathrin to membranes and the recognition of sorting signals within the cytosolic tails of transmembrane cargo molecules. The sequence is that of AP-1 complex subunit sigma-2 (Ap1s2) from Mus musculus (Mouse).